Consider the following 929-residue polypeptide: Bifunctional uridylyltransferase/uridylyl-removing enzyme (929 aa).

Positions Met1–Pro379 are uridylyltransferase. A uridylyl-removing region spans residues Glu380–Thr735. Residues Val495 to Leu618 enclose the HD domain. ACT domains follow at residues Glu736–Arg818 and Val849–Ala929.

Belongs to the GlnD family. The cofactor is Mg(2+).

The catalysed reaction is [protein-PII]-L-tyrosine + UTP = [protein-PII]-uridylyl-L-tyrosine + diphosphate. It carries out the reaction [protein-PII]-uridylyl-L-tyrosine + H2O = [protein-PII]-L-tyrosine + UMP + H(+). Its activity is regulated as follows. Uridylyltransferase (UTase) activity is inhibited by glutamine, while glutamine activates uridylyl-removing (UR) activity. Functionally, modifies, by uridylylation and deuridylylation, the PII regulatory proteins (GlnB and homologs), in response to the nitrogen status of the cell that GlnD senses through the glutamine level. Under low glutamine levels, catalyzes the conversion of the PII proteins and UTP to PII-UMP and PPi, while under higher glutamine levels, GlnD hydrolyzes PII-UMP to PII and UMP (deuridylylation). Thus, controls uridylylation state and activity of the PII proteins, and plays an important role in the regulation of nitrogen fixation and metabolism. This chain is Bifunctional uridylyltransferase/uridylyl-removing enzyme, found in Rhodopseudomonas palustris (strain ATCC BAA-98 / CGA009).